Reading from the N-terminus, the 1372-residue chain is Serine protease pic autotransporter (1372 aa).

Residues methionine 1 to alanine 55 form the signal peptide. The 246-residue stretch at glycine 56–glutamine 301 folds into the Peptidase S6 domain. Residues histidine 127, aspartate 155, and serine 258 each act as charge relay system in the active site. Residues aspartate 1106–phenylalanine 1372 enclose the Autotransporter domain.

Post-translationally, cleaved to release the mature protein from the outer membrane.

The protein resides in the periplasm. It is found in the secreted. Its subcellular location is the cell surface. It localises to the cell outer membrane. Involved in intestinal colonization, displays in vitro mucinolytic activity, serum resistance, and hemagglutination. Important to penetrate the intestinal mucus layer. This chain is Serine protease pic autotransporter (pic), found in Escherichia coli O44:H18 (strain 042 / EAEC).